The following is a 957-amino-acid chain: MKGSWVVSTSIIRITLSFTFLFICHFSDVLAAPTRHLCRPEQKDALLKFKNEFEIGKPSPTCKMVGIESHRKTESWGNNSDCCNWEGVTCNAKSGEVIELNLSCSSLHGRFHSNSSIRNLHFLTTLDRSHNDFEGQITSSIENLSHLTSLDLSYNRFSGQILNSIGNLSRLTSLDLSFNQFSGQIPSSIGNLSHLTFLGLSGNRFFGQIPSSIGNLSHLTFLGLSGNRFFGQFPSSIGGLSNLTNLHLSYNKYSGQIPSSIGNLSQLIVLYLSVNNFYGEIPSSFGNLNQLTRLDVSFNKLGGNFPNVLLNLTGLSVVSLSNNKFTGTLPPNITSLSNLMAFYASDNAFTGTFPSFLFIIPSLTYLGLSGNQLKGTLEFGNISSPSNLQYLNIGSNNFIGPIPSSISKLINLQELGISHLNTQCRPVDFSIFSHLKSLDDLRLSYLTTTTIDLNDILPYFKTLRSLDLSGNLVSATNKSSVSSDPPSQSIQSLYLSGCGITDFPEILRTQHELGFLDVSNNKIKGQVPGWLWTLPNLFYLNLSNNTFIGFQRPTKPEPSMAYLLGSNNNFTGKIPSFICELRSLYTLDLSDNNFSGSIPRCMENLKSNLSELNLRQNNLSGGFPEHIFESLRSLDVGHNQLVGKLPRSLRFFSNLEVLNVESNRINDMFPFWLSSLQKLQVLVLRSNAFHGPINQALFPKLRIIDISHNHFNGSLPTEYFVEWSRMSSLGTYEDGSNVNYLGSGYYQDSMVLMNKGVESELVRILTIYTAVDFSGNKFEGEIPKSIGLLKELHVLNLSNNAFTGHIPSSIGNLTALESLDVSQNKLYGEIPQEIGNLSLLSYMNFSHNQLTGLVPGGQQFLTQRCSSFEGNLGLFGSSLEEVCRDIHTPASHQQFETPQTEEEDEDLISWIAAAIGFGPGIAFGLMFGYILVSYKPEWFMNPFGRNNRRRKRHTTTH.

A signal peptide spans 1–31 (MKGSWVVSTSIIRITLSFTFLFICHFSDVLA). Residues 32–910 (APTRHLCRPE…EEEDEDLISW (879 aa)) lie on the Extracellular side of the membrane. Residues N78, N101, N114, N143, N167, N191, and N215 are each glycosylated (N-linked (GlcNAc...) asparagine). LRR repeat units lie at residues 120–143 (LHFL…SIEN), 144–167 (LSHL…SIGN), 168–192 (LSRL…IGNL), 194–216 (HLTF…IGNL), 217–240 (SHLT…IGGL), 241–264 (SNLT…IGNL), 266–287 (QLIV…SFGN), 288–312 (LNQL…LLNL), 313–336 (TGLS…ITSL), 338–360 (NLMA…LFII), 361–384 (PSLT…NISS), 386–409 (SNLQ…ISKL), 412–434 (LQEL…IFSH), 435–459 (LKSL…ILPY), 460–483 (FKTL…SVSS), 487–510 (SQSI…LRTQ), 511–534 (HELG…LWTL), and 535–557 (PNLF…TKPE). N242 and N263 each carry an N-linked (GlcNAc...) asparagine glycan. 2 N-linked (GlcNAc...) asparagine glycosylation sites follow: N311 and N332. An N-linked (GlcNAc...) asparagine glycan is attached at N381. A glycan (N-linked (GlcNAc...) asparagine) is linked at N477. N-linked (GlcNAc...) asparagine glycosylation is found at N541, N544, N569, N593, N608, and N618. One copy of the LRR 19; degenerate repeat lies at 558–580 (PSMAYLLGSNNNFTGKIPSFICE). LRR repeat units lie at residues 581-605 (LRSL…MENL), 606-630 (KSNL…IFES), 632-652 (RSLD…LRFF), 653-675 (SNLE…WLSS), 677-698 (QKLQ…QALF), 699-722 (PKLR…YFVE), 765-789 (LTIY…IGLL), 790-813 (KELH…IGNL), 815-837 (ALES…IGNL), and 839-862 (LLSY…QFLT). N-linked (GlcNAc...) asparagine glycosylation is present at N712. N-linked (GlcNAc...) asparagine glycans are attached at residues N796, N812, N836, and N844. A helical transmembrane segment spans residues 911 to 931 (IAAAIGFGPGIAFGLMFGYIL). The Cytoplasmic portion of the chain corresponds to 932–957 (VSYKPEWFMNPFGRNNRRRKRHTTTH).

It belongs to the RLP family.

Its subcellular location is the cell membrane. This Arabidopsis thaliana (Mouse-ear cress) protein is Receptor-like protein 34.